The chain runs to 164 residues: Crossover junction endodeoxyribonuclease RuvC (164 aa).

Catalysis depends on residues aspartate 7, glutamate 67, and aspartate 140. Residues aspartate 7, glutamate 67, and aspartate 140 each coordinate Mg(2+).

It belongs to the RuvC family. In terms of assembly, homodimer which binds Holliday junction (HJ) DNA. The HJ becomes 2-fold symmetrical on binding to RuvC with unstacked arms; it has a different conformation from HJ DNA in complex with RuvA. In the full resolvosome a probable DNA-RuvA(4)-RuvB(12)-RuvC(2) complex forms which resolves the HJ. Mg(2+) serves as cofactor.

The protein resides in the cytoplasm. It carries out the reaction Endonucleolytic cleavage at a junction such as a reciprocal single-stranded crossover between two homologous DNA duplexes (Holliday junction).. The RuvA-RuvB-RuvC complex processes Holliday junction (HJ) DNA during genetic recombination and DNA repair. Endonuclease that resolves HJ intermediates. Cleaves cruciform DNA by making single-stranded nicks across the HJ at symmetrical positions within the homologous arms, yielding a 5'-phosphate and a 3'-hydroxyl group; requires a central core of homology in the junction. The consensus cleavage sequence is 5'-(A/T)TT(C/G)-3'. Cleavage occurs on the 3'-side of the TT dinucleotide at the point of strand exchange. HJ branch migration catalyzed by RuvA-RuvB allows RuvC to scan DNA until it finds its consensus sequence, where it cleaves and resolves the cruciform DNA. The protein is Crossover junction endodeoxyribonuclease RuvC of Chloroflexus aggregans (strain MD-66 / DSM 9485).